The following is a 152-amino-acid chain: Deoxyuridine 5'-triphosphate nucleotidohydrolase (152 aa).

Residues 71 to 73 (RSG), asparagine 84, 88 to 90 (LID), and methionine 98 each bind substrate.

The protein belongs to the dUTPase family. Requires Mg(2+) as cofactor.

It catalyses the reaction dUTP + H2O = dUMP + diphosphate + H(+). Its pathway is pyrimidine metabolism; dUMP biosynthesis; dUMP from dCTP (dUTP route): step 2/2. Its function is as follows. This enzyme is involved in nucleotide metabolism: it produces dUMP, the immediate precursor of thymidine nucleotides and it decreases the intracellular concentration of dUTP so that uracil cannot be incorporated into DNA. The chain is Deoxyuridine 5'-triphosphate nucleotidohydrolase from Shewanella putrefaciens (strain CN-32 / ATCC BAA-453).